We begin with the raw amino-acid sequence, 363 residues long: DNA replication and repair protein RecF (363 aa).

Residue 30–37 (GSNGSGKT) coordinates ATP.

It belongs to the RecF family.

It is found in the cytoplasm. The RecF protein is involved in DNA metabolism; it is required for DNA replication and normal SOS inducibility. RecF binds preferentially to single-stranded, linear DNA. It also seems to bind ATP. This chain is DNA replication and repair protein RecF, found in Photorhabdus laumondii subsp. laumondii (strain DSM 15139 / CIP 105565 / TT01) (Photorhabdus luminescens subsp. laumondii).